The primary structure comprises 185 residues: Ribonuclease M5 1 (185 aa).

The Toprim domain occupies Lys-4–Pro-87. The Mg(2+) site is built by Glu-10, Asp-56, and Asp-58.

Belongs to the ribonuclease M5 family. Mg(2+) is required as a cofactor.

It localises to the cytoplasm. The catalysed reaction is Endonucleolytic cleavage of RNA, removing 21 and 42 nucleotides, respectively, from the 5'- and 3'-termini of a 5S-rRNA precursor.. Required for correct processing of both the 5' and 3' ends of 5S rRNA precursor. Cleaves both sides of a double-stranded region yielding mature 5S rRNA in one step. This chain is Ribonuclease M5 1, found in Ligilactobacillus salivarius (strain UCC118) (Lactobacillus salivarius).